The primary structure comprises 464 residues: uncharacterized protein (464 aa).

The next 12 helical transmembrane spans lie at 7-27 (VLNVFSLVMINVIAVDSLRTL), 37-57 (LVFYYIFAALTFFIPVALVAA), 94-114 (VVWYPTMLAFIAATLSYLIAP), 121-141 (FYLLGTALTLFWVFTFLNCFG), 153-173 (ASIGTLLPMIVIIVLGAVWIF), 196-216 (LSLFSAVLFGLIGMEMSAVHA), 231-251 (FYSALLIISTLSLGSLAIVIV), 282-302 (VIAVLIILGGLSGVSAWIIGP), 329-349 (VAILLTQGVIFTVLSTVFILL), 359-379 (LSDLSAQMALLVYIMMFAAAI), 401-421 (MSLISGIGIICCIAAMIVGFI), and 432-452 (FLFECFLIGGLILFVFIPWLF).

This sequence belongs to the amino acid-polyamine-organocation (APC) superfamily.

Its subcellular location is the cell membrane. This is an uncharacterized protein from Legionella pneumophila subsp. pneumophila (strain Philadelphia 1 / ATCC 33152 / DSM 7513).